The sequence spans 470 residues: Peripherin (470 aa).

The interval 1–99 is head; the sequence is MSHHPSGLRA…FLATRSNEKQ (99 aa). Tyrosine 17 bears the 3'-nitrotyrosine mark. Serine 28, serine 50, and serine 59 each carry phosphoserine. The IF rod domain occupies 97–407; sequence EKQELQELND…KLLEGEESRI (311 aa). The segment at 100–132 is coil 1A; that stretch reads ELQELNDRFANFIEKVRFLEQQNAALRGELSQA. The interval 133–143 is linker 1; it reads RGQEPARADQL. Residues 144-239 are coil 1B; that stretch reads CQQELRELRR…KLHEEELRDL (96 aa). Residues 240–262 form a linker 2 region; that stretch reads QVSVESQQVQQVEVEATVKPELT. The interval 263 to 405 is coil 2; sequence AALRDIRAQY…YRKLLEGEES (143 aa). Residue tyrosine 379 is modified to 3'-nitrotyrosine. The interval 406–470 is tail; that stretch reads RISVPVHSFA…ELDKSSAHSY (65 aa). Positions 447 to 470 are disordered; that stretch reads NGEVVTESQKEQRSELDKSSAHSY. The segment covering 454–470 has biased composition (basic and acidic residues); the sequence is SQKEQRSELDKSSAHSY. A Phosphotyrosine modification is found at tyrosine 470.

The protein belongs to the intermediate filament family. As to quaternary structure, forms homodimers (in vitro). Homopolymerizes into a filamentous network (in vitro). Forms heterodimers with NEFL, NEFM or NEFH (in vitro). Interacts with DST (via C-terminus). Interacts with RAB7A; the interaction is direct. Interacts with PRKCE (via phorbol-ester/DAG-type 2 domain). In terms of processing, phosphorylated; phosphorylation increases after nerve injury in regenerating neurons. As to expression, expressed in the neurons of the outer hair cells in the organ of Corti and to a lesser extent in type I spiral ganglion cells.

It is found in the cytoplasm. Its subcellular location is the cytoskeleton. It localises to the cell projection. The protein localises to the axon. The protein resides in the perikaryon. Functionally, class-III neuronal intermediate filament protein. May form an independent structural network without the involvement of other neurofilaments or may cooperate with the neuronal intermediate filament proteins NEFL, NEFH, NEFM and INA to form a filamentous network. Assembly of the neuronal intermediate filaments may be regulated by RAB7A. Plays a role in the development of unmyelinated sensory neurons. May be involved in axon elongation and axon regeneration after injury. Inhibits neurite extension in type II spiral ganglion neurons in the cochlea. The chain is Peripherin (PRPH) from Homo sapiens (Human).